The sequence spans 397 residues: Succinyl-diaminopimelate desuccinylase (397 aa).

H74 is a Zn(2+) binding site. The active site involves D76. D107 lines the Zn(2+) pocket. The Proton acceptor role is filled by E141. Zn(2+) is bound by residues E142, E170, and H368.

The protein belongs to the peptidase M20A family. DapE subfamily. As to quaternary structure, homodimer. Zn(2+) serves as cofactor. The cofactor is Co(2+).

The catalysed reaction is N-succinyl-(2S,6S)-2,6-diaminopimelate + H2O = (2S,6S)-2,6-diaminopimelate + succinate. Its pathway is amino-acid biosynthesis; L-lysine biosynthesis via DAP pathway; LL-2,6-diaminopimelate from (S)-tetrahydrodipicolinate (succinylase route): step 3/3. Its function is as follows. Catalyzes the hydrolysis of N-succinyl-L,L-diaminopimelic acid (SDAP), forming succinate and LL-2,6-diaminopimelate (DAP), an intermediate involved in the bacterial biosynthesis of lysine and meso-diaminopimelic acid, an essential component of bacterial cell walls. This chain is Succinyl-diaminopimelate desuccinylase, found in Mesorhizobium japonicum (strain LMG 29417 / CECT 9101 / MAFF 303099) (Mesorhizobium loti (strain MAFF 303099)).